The following is a 423-amino-acid chain: UPF0229 protein Psyr_4632 (423 aa).

A disordered region spans residues 65–110 (HHGRGGKQTVVHPGNKEFTTGEHIARPQGGGGGKGPGKAGNSGEGM). Over residues 92–107 (QGGGGGKGPGKAGNSG) the composition is skewed to gly residues.

This sequence belongs to the UPF0229 family.

This Pseudomonas syringae pv. syringae (strain B728a) protein is UPF0229 protein Psyr_4632.